A 422-amino-acid polypeptide reads, in one-letter code: SH2 domain-containing protein 4A (422 aa).

Ser-117 and Ser-123 each carry phosphoserine. Disordered regions lie at residues 141–190 (PQNV…EDEK) and 202–282 (SEWQ…VIRT). Basic and acidic residues-rich tracts occupy residues 163 to 190 (TKKDDKAQTKDLTKKKDSEELKQTEDEK) and 212 to 231 (KAADEKRRSLAKQAREDYKR). Phosphoserine is present on Ser-233. The region spanning 316 to 408 (WFHGILTLKK…LGKELLLFPC (93 aa)) is the SH2 domain.

Interacts with ESR1.

The protein localises to the cytoplasm. Inhibits estrogen-induced cell proliferation by competing with PLCG for binding to ESR1, blocking the effect of estrogen on PLCG and repressing estrogen-induced proliferation. May play a role in T-cell development and function. In Rattus norvegicus (Rat), this protein is SH2 domain-containing protein 4A (Sh2d4a).